The sequence spans 269 residues: CCAAT/enhancer-binding protein delta (269 aa).

3 disordered regions span residues 1-48 (MSAA…PGAA), 97-133 (PLELLPGGPARPLGPGPAAPRLLKREPDWGDGDAPGS), and 151-219 (AAGQ…NQEM). Serine 2 is modified (N-acetylserine). Low complexity-rich tracts occupy residues 36-48 (GAEPGALGEPGAA) and 97-107 (PLELLPGGPAR). Lysine 120 is covalently cross-linked (Glycyl lysine isopeptide (Lys-Gly) (interchain with G-Cter in SUMO)). Positions 155 to 175 (PTPPTSPEPPRSSPRQTPAPG) are enriched in pro residues. The segment covering 177–201 (AREKSAGKRGPDRGSPEYRQRRERN) has biased composition (basic and acidic residues). Residues 191–254 (SPEYRQRRER…AGLRQFFKQL (64 aa)) form the bZIP domain. Residues 195–222 (RQRRERNNIAVRKSRDKAKRRNQEMQQK) are basic motif. Residues 226–254 (LSAENEKLHQRVEQLTRDLAGLRQFFKQL) are leucine-zipper.

The protein belongs to the bZIP family. C/EBP subfamily. Binds DNA as a homodimer and as a heterodimer. Can form stable heterodimers with CEBPB. Can form stable heterodimers with CEBPA and CEBPE. Directly interacts with SPI1/PU.1; this interaction does not affect DNA-binding properties of each partner. Interacts with PRDM16.

It localises to the nucleus. Transcription activator that recognizes two different DNA motifs: the CCAAT homology common to many promoters and the enhanced core homology common to many enhancers. Important transcription factor regulating the expression of genes involved in immune and inflammatory responses. Transcriptional activator that enhances IL6 transcription alone and as heterodimer with CEBPB. The polypeptide is CCAAT/enhancer-binding protein delta (CEBPD) (Homo sapiens (Human)).